The following is a 435-amino-acid chain: Asparagine--tRNA ligase (435 aa).

It belongs to the class-II aminoacyl-tRNA synthetase family. As to quaternary structure, homodimer.

The protein localises to the cytoplasm. The enzyme catalyses tRNA(Asn) + L-asparagine + ATP = L-asparaginyl-tRNA(Asn) + AMP + diphosphate + H(+). The polypeptide is Asparagine--tRNA ligase (Leptospira interrogans serogroup Icterohaemorrhagiae serovar copenhageni (strain Fiocruz L1-130)).